We begin with the raw amino-acid sequence, 1789 residues long: Protein TIC 214 (1789 aa).

6 helical membrane passes run 19–39, 68–88, 91–111, 133–153, 176–196, and 227–247; these read IINSVVVVGLYYGFLTTFSIG, FIAGQLMMFISIYYAPLHLAL, PHTITVLALPYLLFHFFWNNH, VFLNNLIFQLFNHFILPSSML, VGWLIGHILFMKWVGLVLVWI, and IFSILLFITCVYYLGRIPSPI.

This sequence belongs to the TIC214 family. As to quaternary structure, part of the Tic complex.

It localises to the plastid. The protein localises to the chloroplast inner membrane. Involved in protein precursor import into chloroplasts. May be part of an intermediate translocation complex acting as a protein-conducting channel at the inner envelope. The sequence is that of Protein TIC 214 from Capsella bursa-pastoris (Shepherd's purse).